A 554-amino-acid polypeptide reads, in one-letter code: Cytochrome c oxidase subunit 1-alpha (554 aa).

The helical transmembrane segment at 26–56 (KDIGVLYLFTAGLAGLISVTLTVYMRMELQH) threads the bilayer. Cys63 and Cys77 are oxidised to a cystine. Helical transmembrane passes span 81 to 118 (AHLW…LHIG), 127 to 148 (LNNL…SLLS), 175 to 203 (AMDL…TFLN), 215 to 248 (PLFA…DRNF), 260 to 295 (DPVL…STFA), and 301 to 319 (GYLP…GFIV). His91 serves as a coordination point for Fe(II)-heme a. Cu cation contacts are provided by His273 and Tyr277. A cross-link (1'-histidyl-3'-tyrosine (His-Tyr)) is located at residues 273-277 (HPEVY). Cu cation-binding residues include His322 and His323. 5 helical membrane-spanning segments follow: residues 331 to 359 (LTQQ…IATM), 367 to 390 (KTPM…VIAQ), 399 to 425 (DTYY…GTYY), 436 to 463 (PEWA…FLGR), and 478 to 508 (SYWN…TLFA). His406 serves as a coordination point for heme a3. His408 provides a ligand contact to Fe(II)-heme a.

It belongs to the heme-copper respiratory oxidase family. Cu(2+) serves as cofactor. It depends on heme as a cofactor.

The protein resides in the cell inner membrane. It carries out the reaction 4 Fe(II)-[cytochrome c] + O2 + 8 H(+)(in) = 4 Fe(III)-[cytochrome c] + 2 H2O + 4 H(+)(out). It functions in the pathway energy metabolism; oxidative phosphorylation. Subunit I and II form the functional core of the enzyme complex. Electrons originating in cytochrome c are transferred via heme a and Cu(A) to the binuclear center formed by heme a3 and Cu(B). This cytochrome c oxidase shows proton pump activity across the membrane in addition to the electron transfer. The sequence is that of Cytochrome c oxidase subunit 1-alpha (ctaDI) from Paracoccus denitrificans.